The sequence spans 83 residues: Small ribosomal subunit protein uS17 (83 aa).

The protein belongs to the universal ribosomal protein uS17 family. As to quaternary structure, part of the 30S ribosomal subunit.

One of the primary rRNA binding proteins, it binds specifically to the 5'-end of 16S ribosomal RNA. The sequence is that of Small ribosomal subunit protein uS17 from Gloeobacter violaceus (strain ATCC 29082 / PCC 7421).